Here is a 574-residue protein sequence, read N- to C-terminus: Ankyrin repeat protein B18 (574 aa).

ANK repeat units follow at residues 56 to 87 (TGYT…DVTI), 135 to 164 (IKSR…DPNF), 167 to 213 (DGYT…NLNA), 217 to 249 (CGNT…NFEI), 253 to 285 (HGLT…NVGE), and 327 to 356 (EGKT…DINA). Residues 541–574 (KCLLTLLPSEIIYEILYMLTIYDLYNISYPPTKV) enclose the F-box domain.

The sequence is that of Ankyrin repeat protein B18 from Variola virus (isolate Human/India/Ind3/1967) (VARV).